The sequence spans 270 residues: MTQNTVIVNGVAMDSRPSQPTHINVHIHQESALTQLLKAGGSLKKFLFHPGDTVPSTARIGYEQLALGVTQILLGVLSCALGVCLSLGPWTVLRASGCAFWAGSVAIAAGAGAIVHEKYPGKLAGYVSSLLTLAGFATVMAAVVLCVNSFIWQTEPFLYIDTVCDRSDPVIPTTGYGWMWRSEEIQRQKEECRAYMQMLRKLFTAIRALFLAVCVLKVIVSLASLGVGLRNLCGQSSQPLNEEGSEKRLLGENSVPPSPSREQTSTAIVL.

Helical transmembrane passes span 65 to 85 (LALG…GVCL), 95 to 115 (ASGC…GAIV), 127 to 147 (VSSL…VLCV), and 209 to 229 (LFLA…GVGL). Residues Ser-236, Ser-245, Ser-254, and Ser-258 each carry the phosphoserine modification. Residues 237–270 (SQPLNEEGSEKRLLGENSVPPSPSREQTSTAIVL) form a disordered region. Residues 260–270 (SREQTSTAIVL) show a composition bias toward polar residues.

The protein belongs to the TMEM176 family.

It is found in the nucleus membrane. Functionally, may play a role in the process of maturation of dendritic cells. Required for the development of cerebellar granule cells. The polypeptide is Transmembrane protein 176B (TMEM176B) (Pongo abelii (Sumatran orangutan)).